A 129-amino-acid polypeptide reads, in one-letter code: Small ribosomal subunit protein uS11 (129 aa).

The protein belongs to the universal ribosomal protein uS11 family. In terms of assembly, part of the 30S ribosomal subunit. Interacts with proteins S7 and S18. Binds to IF-3.

Located on the platform of the 30S subunit, it bridges several disparate RNA helices of the 16S rRNA. Forms part of the Shine-Dalgarno cleft in the 70S ribosome. The protein is Small ribosomal subunit protein uS11 of Bradyrhizobium diazoefficiens (strain JCM 10833 / BCRC 13528 / IAM 13628 / NBRC 14792 / USDA 110).